The primary structure comprises 116 residues: Nucleoid-associated protein PMM0020 (116 aa).

Basic and acidic residues predominate over residues 87–98 (ESSTTTMKERMN). The disordered stretch occupies residues 87 to 116 (ESSTTTMKERMNDLTGGLNLNLPGLDNNDS). Low complexity predominate over residues 99-116 (DLTGGLNLNLPGLDNNDS).

Belongs to the YbaB/EbfC family. As to quaternary structure, homodimer.

The protein localises to the cytoplasm. The protein resides in the nucleoid. In terms of biological role, binds to DNA and alters its conformation. May be involved in regulation of gene expression, nucleoid organization and DNA protection. The chain is Nucleoid-associated protein PMM0020 from Prochlorococcus marinus subsp. pastoris (strain CCMP1986 / NIES-2087 / MED4).